We begin with the raw amino-acid sequence, 297 residues long: Ribosomal RNA small subunit methyltransferase H (297 aa).

Residues 30-32, aspartate 48, phenylalanine 75, aspartate 96, and glutamine 103 contribute to the S-adenosyl-L-methionine site; that span reads GGY.

Belongs to the methyltransferase superfamily. RsmH family.

It is found in the cytoplasm. The catalysed reaction is cytidine(1402) in 16S rRNA + S-adenosyl-L-methionine = N(4)-methylcytidine(1402) in 16S rRNA + S-adenosyl-L-homocysteine + H(+). Specifically methylates the N4 position of cytidine in position 1402 (C1402) of 16S rRNA. This chain is Ribosomal RNA small subunit methyltransferase H, found in Ehrlichia canis (strain Jake).